The chain runs to 247 residues: Coproheme decarboxylase (247 aa).

Fe-coproporphyrin III contacts are provided by residues arginine 129, 143-147, histidine 170, glutamine 183, and serine 221; that span reads YPMDK. Tyrosine 143 is a catalytic residue.

The protein belongs to the ChdC family. Type 1 subfamily. Fe-coproporphyrin III is required as a cofactor.

The enzyme catalyses Fe-coproporphyrin III + 2 H2O2 + 2 H(+) = heme b + 2 CO2 + 4 H2O. It carries out the reaction Fe-coproporphyrin III + H2O2 + H(+) = harderoheme III + CO2 + 2 H2O. The catalysed reaction is harderoheme III + H2O2 + H(+) = heme b + CO2 + 2 H2O. It participates in porphyrin-containing compound metabolism; protoheme biosynthesis. Functionally, involved in coproporphyrin-dependent heme b biosynthesis. Catalyzes the decarboxylation of Fe-coproporphyrin III (coproheme) to heme b (protoheme IX), the last step of the pathway. The reaction occurs in a stepwise manner with a three-propionate intermediate. This chain is Coproheme decarboxylase, found in Bacillus cereus (strain B4264).